The chain runs to 160 residues: Deoxyuridine 5'-triphosphate nucleotidohydrolase (160 aa).

Positions 80, 93, 96, 99, 104, 149, 154, and 155 each coordinate dUMP.

Belongs to the dUTPase family. In terms of assembly, homotrimer. It depends on Mg(2+) as a cofactor.

The catalysed reaction is dUTP + H2O = dUMP + diphosphate + H(+). It functions in the pathway pyrimidine metabolism; dUMP biosynthesis; dUMP from dCTP (dUTP route): step 2/2. In terms of biological role, involved in nucleotide metabolism via production of dUMP, the immediate precursor of thymidine nucleotides, and decreases the intracellular concentration of dUTP so that uracil cannot be incorporated into DNA. The protein is Deoxyuridine 5'-triphosphate nucleotidohydrolase (DUT1) of Debaryomyces hansenii (strain ATCC 36239 / CBS 767 / BCRC 21394 / JCM 1990 / NBRC 0083 / IGC 2968) (Yeast).